The sequence spans 106 residues: Transcription initiation factor IIA subunit 2 (106 aa).

Belongs to the TFIIA subunit 2 family. In terms of assembly, TFIIA is a heterodimer of the large unprocessed subunit 1 and a small subunit gamma. It was originally believed to be a heterotrimer of an alpha, a beta and a gamma subunit.

It is found in the nucleus. TFIIA is a component of the transcription machinery of RNA polymerase II and plays an important role in transcriptional activation. TFIIA in a complex with TBP mediates transcriptional activity. This is Transcription initiation factor IIA subunit 2 (TFIIA-S) from Arabidopsis thaliana (Mouse-ear cress).